A 141-amino-acid chain; its full sequence is Large ribosomal subunit protein uL11 (141 aa).

Belongs to the universal ribosomal protein uL11 family. As to quaternary structure, part of the ribosomal stalk of the 50S ribosomal subunit. Interacts with L10 and the large rRNA to form the base of the stalk. L10 forms an elongated spine to which L12 dimers bind in a sequential fashion forming a multimeric L10(L12)X complex. One or more lysine residues are methylated.

Forms part of the ribosomal stalk which helps the ribosome interact with GTP-bound translation factors. This Chlamydia trachomatis serovar A (strain ATCC VR-571B / DSM 19440 / HAR-13) protein is Large ribosomal subunit protein uL11.